The primary structure comprises 100 residues: Small ribosomal subunit protein bS20 (100 aa).

The protein belongs to the bacterial ribosomal protein bS20 family.

Binds directly to 16S ribosomal RNA. The sequence is that of Small ribosomal subunit protein bS20 from Prochlorococcus marinus (strain MIT 9211).